The primary structure comprises 239 residues: Elongation factor Ts (239 aa).

Residues 82 to 85 form an involved in Mg(2+) ion dislocation from EF-Tu region; sequence TDFV. The segment at 213-239 is disordered; the sequence is AAQTKPKAEEKPAAKKATSKKKKGKKK. Over residues 229 to 239 the composition is skewed to basic residues; sequence ATSKKKKGKKK.

The protein belongs to the EF-Ts family.

It is found in the cytoplasm. In terms of biological role, associates with the EF-Tu.GDP complex and induces the exchange of GDP to GTP. It remains bound to the aminoacyl-tRNA.EF-Tu.GTP complex up to the GTP hydrolysis stage on the ribosome. The sequence is that of Elongation factor Ts from Acaryochloris marina (strain MBIC 11017).